The chain runs to 274 residues: Large ribosomal subunit protein uL2 (274 aa).

The tract at residues 223–274 (VAMNPVDHPHGGGEGRTSGGRHPVSPWGMPTKGFKTRKNKSTDKYIVRRRNK) is disordered.

The protein belongs to the universal ribosomal protein uL2 family. Part of the 50S ribosomal subunit. Forms a bridge to the 30S subunit in the 70S ribosome.

In terms of biological role, one of the primary rRNA binding proteins. Required for association of the 30S and 50S subunits to form the 70S ribosome, for tRNA binding and peptide bond formation. It has been suggested to have peptidyltransferase activity; this is somewhat controversial. Makes several contacts with the 16S rRNA in the 70S ribosome. In Aliivibrio salmonicida (strain LFI1238) (Vibrio salmonicida (strain LFI1238)), this protein is Large ribosomal subunit protein uL2.